The chain runs to 292 residues: ATP synthase gamma chain (292 aa).

Belongs to the ATPase gamma chain family. As to quaternary structure, F-type ATPases have 2 components, CF(1) - the catalytic core - and CF(0) - the membrane proton channel. CF(1) has five subunits: alpha(3), beta(3), gamma(1), delta(1), epsilon(1). CF(0) has three main subunits: a, b and c.

Its subcellular location is the cell inner membrane. Produces ATP from ADP in the presence of a proton gradient across the membrane. The gamma chain is believed to be important in regulating ATPase activity and the flow of protons through the CF(0) complex. In Hydrogenobaculum sp. (strain Y04AAS1), this protein is ATP synthase gamma chain.